We begin with the raw amino-acid sequence, 628 residues long: Probable potassium transport system protein Kup (628 aa).

12 consecutive transmembrane segments (helical) span residues 15-35 (LAIA…LYSL), 55-75 (VISL…VLFV), 104-124 (AGLL…DAVI), 142-162 (PHLS…LFWI), 173-193 (LFGP…LWHI), 210-230 (TFMA…VLVL), 252-272 (WYVL…ALLM), 281-301 (PFFL…STIA), 342-362 (IYVP…VIAF), 372-392 (YGIA…VVMV), 400-420 (LLVA…FGAN), and 426-446 (EGGW…MTWY).

Belongs to the HAK/KUP transporter (TC 2.A.72) family.

The protein localises to the cell inner membrane. It carries out the reaction K(+)(in) + H(+)(in) = K(+)(out) + H(+)(out). In terms of biological role, transport of potassium into the cell. Likely operates as a K(+):H(+) symporter. The sequence is that of Probable potassium transport system protein Kup from Paraburkholderia xenovorans (strain LB400).